The sequence spans 137 residues: Small ribosomal subunit protein uS9 (137 aa).

Positions 104 to 137 (PLKSEGYLTRDPRAKERKKYGLHKARKAPQYSKR) are disordered. The span at 118 to 137 (KERKKYGLHKARKAPQYSKR) shows a compositional bias: basic residues.

It belongs to the universal ribosomal protein uS9 family.

The sequence is that of Small ribosomal subunit protein uS9 from Gloeothece citriformis (strain PCC 7424) (Cyanothece sp. (strain PCC 7424)).